A 773-amino-acid chain; its full sequence is Glucan endo-1,3-beta-D-glucosidase (773 aa).

The tract at residues 1–194 (MPPGAKVPQA…KNYFSIAVLP (194 aa)) is beta-sandwich subdomain. The 647-residue stretch at 1-647 (MPPGAKVPQA…HWICNLDSLG (647 aa)) folds into the GH81 domain. 5 residues coordinate Mg(2+): I31, N34, Q35, Y36, and A89. Residues 195 to 288 (DNTVSTLTYY…QGTSFKTVYR (94 aa)) are alpha/beta subdomain. The segment at 298 to 647 (DKGTYDREAL…HWICNLDSLG (350 aa)) is (alpha/beta)6 barrel subdomain. 2 residues coordinate (1,3-beta-D-glucosyl)n: Y327 and K331. The Ca(2+) site is built by D365, T368, E373, and K376. 2 residues coordinate (1,3-beta-D-glucosyl)n: D402 and H406. D402 is an active-site residue. Positions 454, 455, and 457 each coordinate Ca(2+). The (1,3-beta-D-glucosyl)n site is built by N477, E479, and E483. Active-site residues include E479 and E483. Mg(2+) is bound by residues K527, K618, N619, and W621. Ca(2+) contacts are provided by D712, N714, D716, G717, K718, D723, D748, I749, N750, D752, K754, and D759.

Belongs to the glycosyl hydrolase 81 family. It depends on Ca(2+) as a cofactor. Mg(2+) serves as cofactor.

It localises to the secreted. It carries out the reaction Hydrolysis of (1-&gt;3)-beta-D-glucosidic linkages in (1-&gt;3)-beta-D-glucans.. Inhibited by manganese, zinc, and copper ions. Functionally, cleaves internal linkages in 1,3-beta-glucan. May contribute to plant biomass degradation. The sequence is that of Glucan endo-1,3-beta-D-glucosidase from Acetivibrio thermocellus (strain ATCC 27405 / DSM 1237 / JCM 9322 / NBRC 103400 / NCIMB 10682 / NRRL B-4536 / VPI 7372) (Clostridium thermocellum).